A 102-amino-acid polypeptide reads, in one-letter code: Large ribosomal subunit protein uL24 (102 aa).

The protein belongs to the universal ribosomal protein uL24 family. In terms of assembly, part of the 50S ribosomal subunit.

Its function is as follows. One of two assembly initiator proteins, it binds directly to the 5'-end of the 23S rRNA, where it nucleates assembly of the 50S subunit. One of the proteins that surrounds the polypeptide exit tunnel on the outside of the subunit. The protein is Large ribosomal subunit protein uL24 of Herpetosiphon aurantiacus (strain ATCC 23779 / DSM 785 / 114-95).